The chain runs to 217 residues: Protein canopy 4 (217 aa).

The signal sequence occupies residues 1–27; the sequence is MEMFTVFLFYMFSLVLANQEERLPNKC. Intrachain disulfides connect C27–C185, C30–C173, and C83–C145. Positions 194-217 are disordered; sequence MGMKGSEEESEGKDGKETHDAGEL. The segment covering 205–217 has biased composition (basic and acidic residues); sequence GKDGKETHDAGEL.

It belongs to the canopy family.

The protein resides in the secreted. The polypeptide is Protein canopy 4 (cnpy4) (Danio rerio (Zebrafish)).